We begin with the raw amino-acid sequence, 343 residues long: Ribosomal RNA small subunit methyltransferase C (343 aa).

Belongs to the methyltransferase superfamily. RsmC family. In terms of assembly, monomer.

The protein localises to the cytoplasm. The enzyme catalyses guanosine(1207) in 16S rRNA + S-adenosyl-L-methionine = N(2)-methylguanosine(1207) in 16S rRNA + S-adenosyl-L-homocysteine + H(+). Specifically methylates the guanine in position 1207 of 16S rRNA in the 30S particle. This chain is Ribosomal RNA small subunit methyltransferase C, found in Pseudoalteromonas atlantica (strain T6c / ATCC BAA-1087).